The primary structure comprises 239 residues: tRNA (guanine-N(1)-)-methyltransferase (239 aa).

Residues G108 and 127–132 (LGDYVL) each bind S-adenosyl-L-methionine.

Belongs to the RNA methyltransferase TrmD family. Homodimer.

It localises to the cytoplasm. The catalysed reaction is guanosine(37) in tRNA + S-adenosyl-L-methionine = N(1)-methylguanosine(37) in tRNA + S-adenosyl-L-homocysteine + H(+). Functionally, specifically methylates guanosine-37 in various tRNAs. This is tRNA (guanine-N(1)-)-methyltransferase from Streptococcus pneumoniae (strain P1031).